The primary structure comprises 224 residues: MNFEKLVSQAVNGDRFKIFCGQLTEFTNSLAGEREAIEKGMRQIETQQLEAETSFTERIAEDRVKCAAQRESLERQLQDLTATDNKLSEQKRDWEERQEKAYDELMSYLENEDVDSAGTQFGDHFNSLIKSMNNLSHDSMNGQFNSLKNNLDELNIEKKQLEVAIADQSSTISEMIPSLRPTCGATYKERNTLRIIFHYQVAKLRSEYQKCRLQEEALKARLST.

Coiled-coil stretches lie at residues 63-97 and 137-171; these read RVKCAAQRESLERQLQDLTATDNKLSEQKRDWEER and HDSMNGQFNSLKNNLDELNIEKKQLEVAIADQSST.

As to quaternary structure, interacts with gras-1. Interacts with brc-1 and brd-1.

Its subcellular location is the chromosome. Plays a role in early meiotic events; during prophase I contributes to synaptonemal complex (SC) assembly, synapsis and chiasmata formation and stabilization of homologous chromosomes pairing. Required for restricting SC assembly to bridge paired chromosome axes. Required for the timely progression of meiotic crossover recombination. Required for the synapsis checkpoint. This Caenorhabditis elegans protein is Synaptonemal complex protein 3.